Consider the following 200-residue polypeptide: dITP/XTP pyrophosphatase (200 aa).

8–13 lines the substrate pocket; the sequence is TRNAGK. The Proton acceptor role is filled by Asp-72. Asp-72 serves as a coordination point for Mg(2+). Residues Ser-73, 155-158, Lys-178, and 183-184 contribute to the substrate site; these read FGYD and HR.

Belongs to the HAM1 NTPase family. Homodimer. Mg(2+) is required as a cofactor.

The catalysed reaction is XTP + H2O = XMP + diphosphate + H(+). It catalyses the reaction dITP + H2O = dIMP + diphosphate + H(+). The enzyme catalyses ITP + H2O = IMP + diphosphate + H(+). Pyrophosphatase that catalyzes the hydrolysis of nucleoside triphosphates to their monophosphate derivatives, with a high preference for the non-canonical purine nucleotides XTP (xanthosine triphosphate), dITP (deoxyinosine triphosphate) and ITP. Seems to function as a house-cleaning enzyme that removes non-canonical purine nucleotides from the nucleotide pool, thus preventing their incorporation into DNA/RNA and avoiding chromosomal lesions. In Streptomyces coelicolor (strain ATCC BAA-471 / A3(2) / M145), this protein is dITP/XTP pyrophosphatase.